We begin with the raw amino-acid sequence, 461 residues long: UPF0210 protein LCABL_10110 (461 aa).

It belongs to the UPF0210 family. As to quaternary structure, homodimer.

The chain is UPF0210 protein LCABL_10110 from Lacticaseibacillus casei (strain BL23) (Lactobacillus casei).